A 494-amino-acid chain; its full sequence is DNA-directed DNA/RNA polymerase mu (494 aa).

Residues 1–24 are disordered; sequence MLPKRRRARVGSPSGDAASSTPPS. S12 carries the phosphoserine modification. The BRCT domain maps to 22-122; that stretch reads PPSTRFPGVA…QPVPVECRHR (101 aa). The tract at residues 323 to 332 is involved in ssDNA binding; sequence RGKLQGHDVD. Mg(2+) is bound by residues D330, D332, and D418.

It belongs to the DNA polymerase type-X family. Mg(2+) serves as cofactor. In terms of tissue distribution, expressed in a number of tissues. Abundant in thymus.

It localises to the nucleus. It carries out the reaction DNA(n) + a 2'-deoxyribonucleoside 5'-triphosphate = DNA(n+1) + diphosphate. Gap-filling polymerase involved in repair of DNA double-strand breaks by non-homologous end joining (NHEJ). Participates in immunoglobulin (Ig) light chain gene rearrangement in V(D)J recombination. This Homo sapiens (Human) protein is DNA-directed DNA/RNA polymerase mu (POLM).